Reading from the N-terminus, the 302-residue chain is Recombination-associated protein RdgC (302 aa).

Belongs to the RdgC family.

The protein localises to the cytoplasm. It localises to the nucleoid. May be involved in recombination. This is Recombination-associated protein RdgC from Actinobacillus pleuropneumoniae serotype 3 (strain JL03).